Consider the following 745-residue polypeptide: Cytoskeleton-associated protein 2-like (745 aa).

Disordered stretches follow at residues 26–305, 319–362, 422–483, and 608–638; these read KGKL…VNRV, PATE…LGPQ, FPPQ…TYKR, and EAVTSDTSAAGTNTTSAEELAKEESEQPCPS. Composition is skewed to polar residues over residues 67–89 and 101–136; these read SKTTRPINIKFQTKPASITASQK and GLTSRCFSSNTDCKQSSKPQQQPRAVSFTAGLSRNP. The KEN box motif lies at 183-185; sequence KEN. A compositionally biased stretch (basic and acidic residues) spans 192-202; sequence KPEKPDPELHS. Residue Lys195 forms a Glycyl lysine isopeptide (Lys-Gly) (interchain with G-Cter in SUMO1); alternate linkage. Residue Lys195 forms a Glycyl lysine isopeptide (Lys-Gly) (interchain with G-Cter in SUMO2); alternate linkage. Polar residues-rich tracts occupy residues 205–216, 224–233, 242–253, and 284–301; these read KPNTGSSNQTQK, LSKSSVTQTA, FIRNTQIRTQAV, and NKTQTSKKPMTKNTQDIT. Positions 427 to 442 are enriched in polar residues; that stretch reads HFLNKTAPRTQASTAA. Residues 459–475 show a composition bias toward basic and acidic residues; it reads KKPEGEDRRKQLEEWQK. The span at 608 to 624 shows a compositional bias: polar residues; that stretch reads EAVTSDTSAAGTNTTSA. Ser745 is modified (phosphoserine).

It belongs to the CKAP2 family. Post-translationally, ubiquitinated by the anaphase promoting complex/cyclosome (APC/C). As to expression, highly expressed in regions of active neurogenesis and neural stem/progenitor cells (NSPCs), both embryonic and adult, not detected in lung, liver, kidney, heart, and skeletal muscle.

The protein resides in the cytoplasm. It is found in the cytoskeleton. It localises to the spindle pole. Microtubule-associated protein required for mitotic spindle formation and cell-cycle progression in neural progenitor cells. The chain is Cytoskeleton-associated protein 2-like (Ckap2l) from Mus musculus (Mouse).